Reading from the N-terminus, the 1190-residue chain is Isoleucine--tRNA ligase, cytoplasmic (1190 aa).

Residues 49 to 59 (PFATGLPHYGH) carry the 'HIGH' region motif. The interval 271–299 (DKPKAKLSNGPAGDTKKANPKAKGAKPES) is disordered. The 'KMSKS' region signature appears at 632–636 (KMAKK). Position 635 (Lys-635) interacts with ATP.

It belongs to the class-I aminoacyl-tRNA synthetase family.

The protein localises to the cytoplasm. It localises to the cytosol. The catalysed reaction is tRNA(Ile) + L-isoleucine + ATP = L-isoleucyl-tRNA(Ile) + AMP + diphosphate. This Arabidopsis thaliana (Mouse-ear cress) protein is Isoleucine--tRNA ligase, cytoplasmic.